Reading from the N-terminus, the 603-residue chain is UvrABC system protein C (603 aa).

The region spanning 15 to 92 is the GIY-YIG domain; sequence DKPGCYLMKN…IQKHQPYFNI (78 aa). One can recognise a UVR domain in the interval 197 to 232; the sequence is ATVKRQLTKKMQRAAENMEFERAAEIRDQLHYIEVT.

The protein belongs to the UvrC family. Interacts with UvrB in an incision complex.

It is found in the cytoplasm. The UvrABC repair system catalyzes the recognition and processing of DNA lesions. UvrC both incises the 5' and 3' sides of the lesion. The N-terminal half is responsible for the 3' incision and the C-terminal half is responsible for the 5' incision. The sequence is that of UvrABC system protein C from Limosilactobacillus reuteri (strain DSM 20016) (Lactobacillus reuteri).